The sequence spans 60 residues: Large ribosomal subunit protein uL30 (60 aa).

The protein belongs to the universal ribosomal protein uL30 family. As to quaternary structure, part of the 50S ribosomal subunit.

This chain is Large ribosomal subunit protein uL30, found in Salinispora tropica (strain ATCC BAA-916 / DSM 44818 / JCM 13857 / NBRC 105044 / CNB-440).